The primary structure comprises 465 residues: ATP synthase subunit beta (465 aa).

152 to 159 (GGAGVGKT) provides a ligand contact to ATP.

Belongs to the ATPase alpha/beta chains family. As to quaternary structure, F-type ATPases have 2 components, CF(1) - the catalytic core - and CF(0) - the membrane proton channel. CF(1) has five subunits: alpha(3), beta(3), gamma(1), delta(1), epsilon(1). CF(0) has three main subunits: a(1), b(2) and c(9-12). The alpha and beta chains form an alternating ring which encloses part of the gamma chain. CF(1) is attached to CF(0) by a central stalk formed by the gamma and epsilon chains, while a peripheral stalk is formed by the delta and b chains.

The protein resides in the cell inner membrane. It catalyses the reaction ATP + H2O + 4 H(+)(in) = ADP + phosphate + 5 H(+)(out). Its function is as follows. Produces ATP from ADP in the presence of a proton gradient across the membrane. The catalytic sites are hosted primarily by the beta subunits. The protein is ATP synthase subunit beta of Campylobacter concisus (strain 13826).